The following is a 448-amino-acid chain: MNTHRYLPMTEEDKKEMLATIGVDSIEALFADIPESTRFKSQLAIEAALKEPELIAHFQKLADENQSIKTYTSFLGAGVYEHYIPSIVDHVISRSEFYTAYTPYQPEISQGELQAIFEFQTMICELTGMDIANSSMYDGPTALAEAAMLSCGHTKKKTILVSKAVHPEARAVLKTNAYGQRLNVIEIDANANVTDIESLKAAYNDEVACVIVQHPNFYGSLEPLAEIEEIVHQGKAQFVVSSNPLALGVLKPPGDFGADIVVGDAQPFGIPVQFGGPHCGYFATTKKLMRKIPGRLVGQTVDEEGRRGFVLTLQAREQHIRREKATSNICSNQALNALAASVAMTALGKQGVKEMAKQNVQKSAYLKKQLSLAGIDVVGDGPTFNEFVINCGQPVKDVNRQLLEKGMIGGFDLGSVEPERNGQMLVCVTELRTKEELDLFANEMGALV.

This sequence belongs to the GcvP family. N-terminal subunit subfamily. As to quaternary structure, the glycine cleavage system is composed of four proteins: P, T, L and H. In this organism, the P 'protein' is a heterodimer of two subunits.

It carries out the reaction N(6)-[(R)-lipoyl]-L-lysyl-[glycine-cleavage complex H protein] + glycine + H(+) = N(6)-[(R)-S(8)-aminomethyldihydrolipoyl]-L-lysyl-[glycine-cleavage complex H protein] + CO2. Functionally, the glycine cleavage system catalyzes the degradation of glycine. The P protein binds the alpha-amino group of glycine through its pyridoxal phosphate cofactor; CO(2) is released and the remaining methylamine moiety is then transferred to the lipoamide cofactor of the H protein. The protein is Probable glycine dehydrogenase (decarboxylating) subunit 1 of Shouchella clausii (strain KSM-K16) (Alkalihalobacillus clausii).